A 76-amino-acid polypeptide reads, in one-letter code: Alpha/kappa-conotoxin-like pl14.1 (76 aa).

An N-terminal signal peptide occupies residues 1–27; the sequence is MPSVRSVTCCCLLWMMLSVQLVTPGSP. A propeptide spanning residues 28 to 39 is cleaved from the precursor; sequence ATAQLSGQRTAR. 2 cysteine pairs are disulfide-bonded: cysteine 46–cysteine 61 and cysteine 50–cysteine 63. An Asparagine amide modification is found at asparagine 64. The propeptide occupies 65-76; the sequence is GKRDVVSSSMAV.

Belongs to the conotoxin J superfamily. Expressed by the venom duct.

It is found in the secreted. Its function is as follows. Highly inhibits both nicotinic acetylcholine receptors (neuronal (alpha-3/beta-4) and muscular (alpha-1/beta-1/epsilon/delta) subtypes) and the voltage-gated potassium channel Kv1.6/KCNA6 subtype. The sequence is that of Alpha/kappa-conotoxin-like pl14.1 from Conus planorbis (Planorbis cone).